Reading from the N-terminus, the 301-residue chain is Probable 2-dehydro-3-deoxy-D-pentonate aldolase YjhH (301 aa).

Residues threonine 46 and tyrosine 109 each act as charge relay system in the active site. Tyrosine 135 serves as the catalytic Proton donor. Catalysis depends on lysine 164, which acts as the Schiff-base intermediate with substrate.

This sequence belongs to the DapA family.

Its subcellular location is the cytoplasm. It catalyses the reaction 2-dehydro-3-deoxy-D-arabinonate = glycolaldehyde + pyruvate. Functionally, functions as a 2-dehydro-3-deoxy-D-pentonate aldolase. The chain is Probable 2-dehydro-3-deoxy-D-pentonate aldolase YjhH (yjhH) from Escherichia coli (strain K12).